The following is a 513-amino-acid chain: Zinc finger CCCH-type with G patch domain-containing protein (513 aa).

The C3H1-type zinc finger occupies 155–178; that stretch reads PCSYYLEGECRFDEAKCRFSHGAL. Acidic residues-rich tracts occupy residues 252–261 and 273–283; these read DQDEDDELSS and SDEAESDMDDL. The segment at 252-283 is disordered; that stretch reads DQDEDDELSSEESTSSMRDASSDEAESDMDDL. Positions 312-358 constitute a G-patch domain; it reads TRGIGSKLMEKMGYIHGTGLGSEGRGIVTPVSAQILPQGRSLDACME. Disordered regions lie at residues 411–430 and 477–513; these read PGES…NNEL and QVQM…MFEF. Residues 477-495 are compositionally biased toward polar residues; that stretch reads QVQMQSHKQELATLQAQER. Over residues 496–513 the composition is skewed to basic and acidic residues; the sequence is SLSKEQQTRKSKNKMFEF.

The protein resides in the nucleus. In terms of biological role, transcription repressor. The protein is Zinc finger CCCH-type with G patch domain-containing protein of Drosophila sechellia (Fruit fly).